A 215-amino-acid chain; its full sequence is Small ribosomal subunit protein uS7 (215 aa).

The protein belongs to the universal ribosomal protein uS7 family. Part of the 30S ribosomal subunit.

Functionally, one of the primary rRNA binding proteins, it binds directly to 16S rRNA where it nucleates assembly of the head domain of the 30S subunit. Is located at the subunit interface close to the decoding center. This Thermococcus kodakarensis (strain ATCC BAA-918 / JCM 12380 / KOD1) (Pyrococcus kodakaraensis (strain KOD1)) protein is Small ribosomal subunit protein uS7.